The primary structure comprises 254 residues: Thiazole synthase (254 aa).

K96 acts as the Schiff-base intermediate with DXP in catalysis. 1-deoxy-D-xylulose 5-phosphate-binding positions include G157, 183–184 (AG), and 205–206 (NT).

The protein belongs to the ThiG family. As to quaternary structure, homotetramer. Forms heterodimers with either ThiH or ThiS.

Its subcellular location is the cytoplasm. The catalysed reaction is [ThiS sulfur-carrier protein]-C-terminal-Gly-aminoethanethioate + 2-iminoacetate + 1-deoxy-D-xylulose 5-phosphate = [ThiS sulfur-carrier protein]-C-terminal Gly-Gly + 2-[(2R,5Z)-2-carboxy-4-methylthiazol-5(2H)-ylidene]ethyl phosphate + 2 H2O + H(+). Its pathway is cofactor biosynthesis; thiamine diphosphate biosynthesis. Its function is as follows. Catalyzes the rearrangement of 1-deoxy-D-xylulose 5-phosphate (DXP) to produce the thiazole phosphate moiety of thiamine. Sulfur is provided by the thiocarboxylate moiety of the carrier protein ThiS. In vitro, sulfur can be provided by H(2)S. The polypeptide is Thiazole synthase (Clostridium kluyveri (strain ATCC 8527 / DSM 555 / NBRC 12016 / NCIMB 10680 / K1)).